The following is a 188-amino-acid chain: Adenine phosphoribosyltransferase (188 aa).

This sequence belongs to the purine/pyrimidine phosphoribosyltransferase family. Homodimer.

Its subcellular location is the cytoplasm. It catalyses the reaction AMP + diphosphate = 5-phospho-alpha-D-ribose 1-diphosphate + adenine. Its pathway is purine metabolism; AMP biosynthesis via salvage pathway; AMP from adenine: step 1/1. Catalyzes a salvage reaction resulting in the formation of AMP, that is energically less costly than de novo synthesis. The chain is Adenine phosphoribosyltransferase from Paraburkholderia phymatum (strain DSM 17167 / CIP 108236 / LMG 21445 / STM815) (Burkholderia phymatum).